Reading from the N-terminus, the 206-residue chain is Ribosomal RNA small subunit methyltransferase G (206 aa).

Residues Gly71, Phe76, 122-123 (AE), and Arg135 contribute to the S-adenosyl-L-methionine site.

It belongs to the methyltransferase superfamily. RNA methyltransferase RsmG family.

It is found in the cytoplasm. Functionally, specifically methylates the N7 position of a guanine in 16S rRNA. This Bacteroides thetaiotaomicron (strain ATCC 29148 / DSM 2079 / JCM 5827 / CCUG 10774 / NCTC 10582 / VPI-5482 / E50) protein is Ribosomal RNA small subunit methyltransferase G.